A 62-amino-acid polypeptide reads, in one-letter code: MKVNDRVTVKTDGGPRRPGVVLAVEEFSEGTMYLVSLEDYPLGIWFFNESGHQDGIFVEKTE.

Belongs to the DsrB family.

The chain is Protein DsrB from Citrobacter koseri (strain ATCC BAA-895 / CDC 4225-83 / SGSC4696).